The chain runs to 1097 residues: UPF0746 protein DDB_G0281095 (1097 aa).

Residues 1 to 11 (MVNNNKRKEIE) show a composition bias toward basic and acidic residues. The disordered stretch occupies residues 1–24 (MVNNNKRKEIENQENDNDDDNDGL). Acidic residues predominate over residues 12–22 (NQENDNDDDND). An SAP domain is found at 35–69 (YDSIRSKELQTIAKSLGLPNNGKKQEVYKRIEGYF). Residues 329–521 (FKEIREIHQQ…QLILELNEIQ (193 aa)) are a coiled coil.

Belongs to the UPF0746 family.

The sequence is that of UPF0746 protein DDB_G0281095 from Dictyostelium discoideum (Social amoeba).